Consider the following 200-residue polypeptide: Holliday junction resolvase RecU (200 aa).

The disordered stretch occupies residues 1–25; it reads MTIRYPNGKRYNQASQPQKTPIKTH. Residues 10–25 are compositionally biased toward polar residues; sequence RYNQASQPQKTPIKTH. Residues Thr85, Asp87, Glu100, and Gln119 each coordinate Mg(2+).

It belongs to the RecU family. It depends on Mg(2+) as a cofactor.

The protein resides in the cytoplasm. The catalysed reaction is Endonucleolytic cleavage at a junction such as a reciprocal single-stranded crossover between two homologous DNA duplexes (Holliday junction).. Its function is as follows. Endonuclease that resolves Holliday junction intermediates in genetic recombination. Cleaves mobile four-strand junctions by introducing symmetrical nicks in paired strands. Promotes annealing of linear ssDNA with homologous dsDNA. Required for DNA repair, homologous recombination and chromosome segregation. The polypeptide is Holliday junction resolvase RecU (Bacillus cereus (strain B4264)).